The chain runs to 429 residues: Glutamate-1-semialdehyde 2,1-aminomutase (429 aa).

Lys267 carries the post-translational modification N6-(pyridoxal phosphate)lysine.

This sequence belongs to the class-III pyridoxal-phosphate-dependent aminotransferase family. HemL subfamily. Homodimer. Requires pyridoxal 5'-phosphate as cofactor.

It is found in the cytoplasm. The enzyme catalyses (S)-4-amino-5-oxopentanoate = 5-aminolevulinate. The protein operates within porphyrin-containing compound metabolism; protoporphyrin-IX biosynthesis; 5-aminolevulinate from L-glutamyl-tRNA(Glu): step 2/2. In Stenotrophomonas maltophilia (strain R551-3), this protein is Glutamate-1-semialdehyde 2,1-aminomutase.